We begin with the raw amino-acid sequence, 299 residues long: Delta-9 desaturase-like 2 protein (299 aa).

The chain crosses the membrane as a helical span at residues 55–75 (WEAFRFGIILAILTNLCITFS). The short motif at 77-82 (HRNLTH) is the Histidine box-1 element. A Histidine box-2 motif is present at residues 114 to 118 (HRFHH). A helical membrane pass occupies residues 174 to 194 (LVLHILAFWTLIYLWGGLPYL). The Histidine box-3 motif lies at 246–250 (HNNHH). The helical transmembrane segment at 262–282 (WYQLDITWYLIWFFQALGLAT) threads the bilayer.

The protein belongs to the fatty acid desaturase type 1 family. Fe cation serves as cofactor.

Its subcellular location is the endoplasmic reticulum membrane. It participates in lipid metabolism; polyunsaturated fatty acid biosynthesis. The protein is Delta-9 desaturase-like 2 protein of Arabidopsis thaliana (Mouse-ear cress).